A 313-amino-acid chain; its full sequence is Small glutamine-rich tetratricopeptide repeat-containing protein alpha (313 aa).

The tract at residues 66-100 (ATGKEMPQDLRSPARTPPSEEDSAEAERLKTEGNE) is disordered. Serine 77 bears the Phosphoserine mark. Position 81 is a phosphothreonine (threonine 81). At serine 84 the chain carries Phosphoserine. Positions 90-100 (EAERLKTEGNE) are enriched in basic and acidic residues. TPR repeat units follow at residues 91-124 (AERL…NPAN), 125-158 (AVYF…DPAY), and 159-192 (SKAY…DPDN). Lysine 137 carries the N6-acetyllysine modification. The disordered stretch occupies residues 250–269 (MISGGNNPLGTPGTSPSQND). Serine 301 is subject to Phosphoserine. Residue threonine 303 is modified to Phosphothreonine. Phosphoserine is present on serine 305.

It belongs to the SGT family. As to quaternary structure, homodimer. Homooligomer. Interacts with DNAJC5 and DNAJC5B. Interacts (via TPR repeats) with HSP90AA1. Interacts (via Gln-rich region) with SLC2A1. Interacts with HSP90AB1. Interacts (via TPR repeats) with HSPA8/Hsc70; the interaction is direct. Interacts with BAG6 (via ubiquitin-like domain); interaction prevents interaction between BAG6 and RNF126. Forms a multiprotein complex, at least composed of DNAJB12, DNAJB14, HSPA8/Hsc70 and SGTA; interaction with DNAJB14 and HSPA8/Hsc70 is direct. In terms of assembly, (Microbial infection) Interacts with Vpu and Gag from HIV-1. (Microbial infection) Interacts with SARS-CoV accessory protein 7a. As to expression, ubiquitous.

It is found in the cytoplasm. The protein resides in the nucleus. In terms of biological role, co-chaperone that binds misfolded and hydrophobic patches-containing client proteins in the cytosol. Mediates their targeting to the endoplasmic reticulum but also regulates their sorting to the proteasome when targeting fails. Functions in tail-anchored/type II transmembrane proteins membrane insertion constituting with ASNA1 and the BAG6 complex a targeting module. Functions upstream of the BAG6 complex and ASNA1, binding more rapidly the transmembrane domain of newly synthesized proteins. It is also involved in the regulation of the endoplasmic reticulum-associated misfolded protein catabolic process via its interaction with BAG6: collaborates with the BAG6 complex to maintain hydrophobic substrates in non-ubiquitinated states. Competes with RNF126 for interaction with BAG6, preventing the ubiquitination of client proteins associated with the BAG6 complex. Binds directly to HSC70 and HSP70 and regulates their ATPase activity. (Microbial infection) In case of infection by polyomavirus, involved in the virus endoplasmic reticulum membrane penetration and infection via interaction with DNAJB12, DNAJB14 and HSPA8/Hsc70. The protein is Small glutamine-rich tetratricopeptide repeat-containing protein alpha (SGTA) of Homo sapiens (Human).